The following is a 603-amino-acid chain: Pyruvate decarboxylase 4 (603 aa).

Substrate is bound by residues Asp65 and His152. Positions 430-512 (DSWFNCQKLK…FLINNGGYTI (83 aa)) are thiamine pyrophosphate binding. Positions 480, 507, and 509 each coordinate Mg(2+). Glu513 lines the substrate pocket.

It belongs to the TPP enzyme family. Homotetramer. The cofactor is a metal cation. Requires thiamine diphosphate as cofactor. In terms of tissue distribution, expressed in shoots and at lowe levels in roots, flowers and siliques.

The enzyme catalyses a 2-oxocarboxylate + H(+) = an aldehyde + CO2. The sequence is that of Pyruvate decarboxylase 4 (PDC4) from Arabidopsis thaliana (Mouse-ear cress).